We begin with the raw amino-acid sequence, 132 residues long: MALTLDIVTPEKRVLSVQVDEVRAPGVQGGFGVRLNHEPFMTALEPGRLTYVEGGREHHYAVGGGFLQVADNRVIVLADTAEAAGEIDVDRARKAFEDAQNRLLQLTEQDESHSAESARVRRAAARLTVAGR.

It belongs to the ATPase epsilon chain family. F-type ATPases have 2 components, CF(1) - the catalytic core - and CF(0) - the membrane proton channel. CF(1) has five subunits: alpha(3), beta(3), gamma(1), delta(1), epsilon(1). CF(0) has three main subunits: a, b and c.

The protein localises to the cell inner membrane. Functionally, produces ATP from ADP in the presence of a proton gradient across the membrane. The polypeptide is ATP synthase epsilon chain (Anaeromyxobacter dehalogenans (strain 2CP-1 / ATCC BAA-258)).